We begin with the raw amino-acid sequence, 1031 residues long: Probable ATP-dependent RNA helicase DDX46 (1031 aa).

The span at 1–24 (MGRESRHYRKRSASRGRSGSRSRS) shows a compositional bias: basic residues. A disordered region spans residues 1–228 (MGRESRHYRK…EMEGEELDPL (228 aa)). G2 carries the N-myristoyl glycine lipid modification. The span at 26-49 (SPSDKRSKRGDDRRSRSRDRDRRR) shows a compositional bias: basic and acidic residues. 2 stretches are compositionally biased toward basic residues: residues 50-73 (ERSRSRDKRRSRSRDRKRLRRSRS) and 81-103 (ERRRSRSRDRRRSRSRSRGRRSR). The segment covering 112-200 (KKTENRSRSK…EMKQGKKWSL (89 aa)) has biased composition (basic and acidic residues). Positions 152 to 197 (DQNKLEEEMRKRKERVEKWREEQRKKAMENIGELKKEIEEMKQGKK) form a coiled coil. K186 participates in a covalent cross-link: Glycyl lysine isopeptide (Lys-Gly) (interchain with G-Cter in SUMO2). At S199 the chain carries Phosphoserine. 2 stretches are compositionally biased toward acidic residues: residues 201–211 (EDDDDDEDDPA) and 219–228 (EMEGEELDPL). N6-acetyllysine is present on K263. The residue at position 294 (Y294) is a Phosphotyrosine. S295 and S296 each carry phosphoserine. Residue K325 forms a Glycyl lysine isopeptide (Lys-Gly) (interchain with G-Cter in SUMO2) linkage. S346 is subject to Phosphoserine. The Q motif signature appears at 372–400 (KSWVQCGISMKILNSLKKHGYEKPTPIQT). The 179-residue stretch at 403–581 (IPAIMSGRDL…RRILSKPIEV (179 aa)) folds into the Helicase ATP-binding domain. 416–423 (AKTGSGKT) is a binding site for ATP. The DEAD box signature appears at 529-532 (DEAD). In terms of domain architecture, Helicase C-terminal spans 592-753 (DVEQQVIVIE…AVPPDLEKLW (162 aa)). Residue K776 is modified to N6-acetyllysine. K779 participates in a covalent cross-link: Glycyl lysine isopeptide (Lys-Gly) (interchain with G-Cter in SUMO2). A Phosphoserine modification is found at S804. K903 is modified (N6-acetyllysine). Residues K907 and K915 each participate in a glycyl lysine isopeptide (Lys-Gly) (interchain with G-Cter in SUMO2) cross-link. S928 carries the post-translational modification Phosphoserine.

Belongs to the DEAD box helicase family. DDX46/PRP5 subfamily. As to quaternary structure, component of the 17S U2 SnRNP complex, a ribonucleoprotein complex that contains small nuclear RNA (snRNA) U2 and a number of specific proteins. Within the 17S U2 SnRNP complex, DDX46 is part of the SF3B subcomplex, which is required for 'A' complex assembly formed by the stable binding of U2 snRNP to the branchpoint sequence in pre-mRNA. Recruited to the 17S U2 SnRNP complex following release of DDX42; DDX42 and DDX46 bind the SF3B subcomplex in a competitive manner.

The protein localises to the nucleus speckle. Its subcellular location is the nucleus. It localises to the cajal body. It carries out the reaction ATP + H2O = ADP + phosphate + H(+). In terms of biological role, component of the 17S U2 SnRNP complex of the spliceosome, a large ribonucleoprotein complex that removes introns from transcribed pre-mRNAs. The 17S U2 SnRNP complex (1) directly participates in early spliceosome assembly and (2) mediates recognition of the intron branch site during pre-mRNA splicing by promoting the selection of the pre-mRNA branch-site adenosine, the nucleophile for the first step of splicing. Within the 17S U2 SnRNP complex, DDX46 plays essential roles during assembly of pre-spliceosome and proofreading of the branch site. The protein is Probable ATP-dependent RNA helicase DDX46 of Homo sapiens (Human).